Here is a 254-residue protein sequence, read N- to C-terminus: Hydroxyacylglutathione hydrolase (254 aa).

Zn(2+) is bound by residues H53, H55, D57, H58, H111, D128, and H166.

Belongs to the metallo-beta-lactamase superfamily. Glyoxalase II family. As to quaternary structure, monomer. Requires Zn(2+) as cofactor.

It carries out the reaction an S-(2-hydroxyacyl)glutathione + H2O = a 2-hydroxy carboxylate + glutathione + H(+). It participates in secondary metabolite metabolism; methylglyoxal degradation; (R)-lactate from methylglyoxal: step 2/2. Its function is as follows. Thiolesterase that catalyzes the hydrolysis of S-D-lactoyl-glutathione to form glutathione and D-lactic acid. In Aeromonas hydrophila subsp. hydrophila (strain ATCC 7966 / DSM 30187 / BCRC 13018 / CCUG 14551 / JCM 1027 / KCTC 2358 / NCIMB 9240 / NCTC 8049), this protein is Hydroxyacylglutathione hydrolase.